The chain runs to 868 residues: Probable beta-glucosidase F (868 aa).

The first 20 residues, Met1–Ala20, serve as a signal peptide directing secretion. A disordered region spans residues Ser21–Tyr40. N-linked (GlcNAc...) asparagine glycosylation is found at Asn65, Asn73, and Asn257. The active site involves Asp285. Asn328, Asn360, Asn395, Asn421, and Asn726 each carry an N-linked (GlcNAc...) asparagine glycan. Positions Tyr731–Gly752 are disordered.

It belongs to the glycosyl hydrolase 3 family.

The protein localises to the secreted. It carries out the reaction Hydrolysis of terminal, non-reducing beta-D-glucosyl residues with release of beta-D-glucose.. Its pathway is glycan metabolism; cellulose degradation. Functionally, beta-glucosidases are one of a number of cellulolytic enzymes involved in the degradation of cellulosic biomass. Catalyzes the last step releasing glucose from the inhibitory cellobiose. The sequence is that of Probable beta-glucosidase F (bglF) from Emericella nidulans (strain FGSC A4 / ATCC 38163 / CBS 112.46 / NRRL 194 / M139) (Aspergillus nidulans).